The following is a 288-amino-acid chain: Probable endonuclease 4 (288 aa).

Zn(2+) is bound by residues His75, His115, Glu153, Asp187, His190, His224, Asp237, His239, and Glu269.

The protein belongs to the AP endonuclease 2 family. Requires Zn(2+) as cofactor.

It catalyses the reaction Endonucleolytic cleavage to 5'-phosphooligonucleotide end-products.. In terms of biological role, endonuclease IV plays a role in DNA repair. It cleaves phosphodiester bonds at apurinic or apyrimidinic (AP) sites, generating a 3'-hydroxyl group and a 5'-terminal sugar phosphate. The sequence is that of Probable endonuclease 4 from Chlamydia trachomatis serovar A (strain ATCC VR-571B / DSM 19440 / HAR-13).